A 209-amino-acid polypeptide reads, in one-letter code: Molybdenum cofactor guanylyltransferase (209 aa).

GTP contacts are provided by residues 16 to 18 (LAG), Lys-28, Asn-56, Asp-69, and Asp-103. Residue Asp-103 participates in Mg(2+) binding.

The protein belongs to the MobA family. In terms of assembly, monomer. Mg(2+) is required as a cofactor.

The protein localises to the cytoplasm. It catalyses the reaction Mo-molybdopterin + GTP + H(+) = Mo-molybdopterin guanine dinucleotide + diphosphate. Functionally, transfers a GMP moiety from GTP to Mo-molybdopterin (Mo-MPT) cofactor (Moco or molybdenum cofactor) to form Mo-molybdopterin guanine dinucleotide (Mo-MGD) cofactor. The protein is Molybdenum cofactor guanylyltransferase of Rhizobium leguminosarum bv. trifolii (strain WSM2304).